We begin with the raw amino-acid sequence, 203 residues long: Meiotically up-regulated protein PB17E12.09 (203 aa).

Positions 92–177 (CNRKIEGYIK…KEMQLYMTKI (86 aa)) form a coiled coil.

It localises to the cytoplasm. Has a role in meiosis and sporulation. This chain is Meiotically up-regulated protein PB17E12.09, found in Schizosaccharomyces pombe (strain 972 / ATCC 24843) (Fission yeast).